Reading from the N-terminus, the 87-residue chain is Protein anon-73B1 (87 aa).

A helical membrane pass occupies residues 25–47 (LLIRYGLYVGALFQFVCISAAVL). The disordered stretch occupies residues 50–87 (NNPDSQSNPETGEVTEREGEPVRTRLHKIRKLEKKKRR). Basic and acidic residues predominate over residues 63–72 (VTEREGEPVR). The segment covering 73 to 87 (TRLHKIRKLEKKKRR) has biased composition (basic residues).

It belongs to the UPF0239 family.

It is found in the membrane. In Drosophila simulans (Fruit fly), this protein is Protein anon-73B1 (anon-73B1).